A 247-amino-acid polypeptide reads, in one-letter code: PF03932 family protein CutC (247 aa).

This sequence belongs to the CutC family.

It is found in the cytoplasm. The chain is PF03932 family protein CutC from Vibrio parahaemolyticus serotype O3:K6 (strain RIMD 2210633).